Consider the following 566-residue polypeptide: Glucose-6-phosphate isomerase (566 aa).

E374 serves as the catalytic Proton donor. Residues H405 and K529 contribute to the active site.

The protein belongs to the GPI family.

It is found in the cytoplasm. The enzyme catalyses alpha-D-glucose 6-phosphate = beta-D-fructose 6-phosphate. The protein operates within carbohydrate biosynthesis; gluconeogenesis. Its pathway is carbohydrate degradation; glycolysis; D-glyceraldehyde 3-phosphate and glycerone phosphate from D-glucose: step 2/4. Catalyzes the reversible isomerization of glucose-6-phosphate to fructose-6-phosphate. The protein is Glucose-6-phosphate isomerase of Bifidobacterium longum (strain NCC 2705).